The sequence spans 269 residues: Ribonuclease HII (269 aa).

In terms of domain architecture, RNase H type-2 spans 83–269; it reads YLIAGVDEVG…HRMSFLTNIL (187 aa). 3 residues coordinate a divalent metal cation: Asp-89, Glu-90, and Asp-185.

This sequence belongs to the RNase HII family. It depends on Mn(2+) as a cofactor. Requires Mg(2+) as cofactor.

The protein resides in the cytoplasm. It carries out the reaction Endonucleolytic cleavage to 5'-phosphomonoester.. Its function is as follows. Endonuclease that specifically degrades the RNA of RNA-DNA hybrids. This is Ribonuclease HII from Clostridium botulinum (strain Langeland / NCTC 10281 / Type F).